The primary structure comprises 537 residues: Mitochondria-eating protein (537 aa).

Residues 1–270 (MAESLKKLAK…SHSRSRSHSR (270 aa)) form an interaction with YWHAG/14-3-3 protein gamma region. Residues S13, S85, S123, S127, S154, and S157 each carry the phosphoserine modification. The segment at 109-150 (SKNRDNSPDQDQHQSDNESFSETQPTQVQDDLAESGKSLEGA) is disordered. Residues 110-124 (KNRDNSPDQDQHQSD) show a composition bias toward basic and acidic residues. A compositionally biased stretch (polar residues) spans 125-137 (NESFSETQPTQVQ). 2 coiled-coil regions span residues 152 to 184 (NGSTISLLAAEEEINQLKKQLKSLQAQEDARHK) and 210 to 243 (QDVVSNYEKHLQNLKEEIAVLSAEKSGLQGRSAR). Disordered regions lie at residues 171-212 (QLKS…PQDV) and 233-291 (EKSG…RAKM). A compositionally biased stretch (basic and acidic residues) spans 179-209 (EDARHKTSENRRSEALKSDHRSTKRTQDQRP). A compositionally biased stretch (low complexity) spans 239–251 (GRSARSPSPSTGT). Over residues 252–269 (RSHRRGRSRSHSRSRSHS) the composition is skewed to basic residues. 3 positions are modified to phosphoserine: S283, S285, and S508.

This sequence belongs to the MIEAP family. Interacts (via coiled-coil domains) with BNIP3L (via BH3 domain). Interacts (via coiled-coil domains) with BNIP3 (via BH3 domain). Interacts with YWHAG/14-3-3 protein gamma; a protein that also plays a role in MALM. In testis, expressed primarily in spermatids.

It is found in the cytoplasm. Its subcellular location is the cytosol. The protein localises to the mitochondrion outer membrane. It localises to the mitochondrion matrix. In terms of biological role, key regulator of mitochondrial quality that mediates the repairing or degradation of unhealthy mitochondria in response to mitochondrial damage. Mediator of mitochondrial protein catabolic process (also named MALM) by mediating the degradation of damaged proteins inside mitochondria by promoting the accumulation in the mitochondrial matrix of hydrolases that are characteristic of the lysosomal lumen. Also involved in mitochondrion degradation of damaged mitochondria by promoting the formation of vacuole-like structures (named MIV), which engulf and degrade unhealthy mitochondria by accumulating lysosomes. The physical interaction of SPATA18/MIEAP, BNIP3 and BNIP3L/NIX at the mitochondrial outer membrane regulates the opening of a pore in the mitochondrial double membrane in order to mediate the translocation of lysosomal proteins from the cytoplasm to the mitochondrial matrix. Binds cardiolipin. May form molecular condensates (non-membrane-bounded organelles) within mitochondria that compartmentalize and promote cardiolipin metabolism. In Mus musculus (Mouse), this protein is Mitochondria-eating protein (Spata18).